The primary structure comprises 299 residues: MSESPDLSQIAPTLKAEILAEALPYIRQYHGKTVVIKYGGNAMTEERLKQGFARDVILLKLVGINPVIVHGGGPQIDQALKKIGKQGTFIQGMRVTDEETMEVVEWVLGGEVQQDIVTLINHFGGHAVGLTGKDGGLIHARKLLMPDRDNPGQYIDIGQVGEVEAINPAVVKALQDDAFIPVISPIGFGEDGLSYNINADLVAGKLAVVLNAEKLVMMTNIPGVMDKEGTLLTDLSAREIDALFADGTISGGMLPKISSALDAAKSGVRSVHIIDGRIEHSVLLEILTEQPFGTMIRSH.

Substrate contacts are provided by residues 72–73 (GG), Arg94, and Asn196.

It belongs to the acetylglutamate kinase family. ArgB subfamily.

It localises to the cytoplasm. The enzyme catalyses N-acetyl-L-glutamate + ATP = N-acetyl-L-glutamyl 5-phosphate + ADP. It functions in the pathway amino-acid biosynthesis; L-arginine biosynthesis; N(2)-acetyl-L-ornithine from L-glutamate: step 2/4. In terms of biological role, catalyzes the ATP-dependent phosphorylation of N-acetyl-L-glutamate. This Paraburkholderia phymatum (strain DSM 17167 / CIP 108236 / LMG 21445 / STM815) (Burkholderia phymatum) protein is Acetylglutamate kinase.